The chain runs to 131 residues: Large ribosomal subunit protein bL17 (131 aa).

Belongs to the bacterial ribosomal protein bL17 family. As to quaternary structure, part of the 50S ribosomal subunit. Contacts protein L32.

The polypeptide is Large ribosomal subunit protein bL17 (Teredinibacter turnerae (strain ATCC 39867 / T7901)).